The chain runs to 442 residues: Chromosomal replication initiator protein DnaA (442 aa).

A domain I, interacts with DnaA modulators region spans residues 1–75 (MDAWPRCLER…GNGEVALAVG (75 aa)). Positions 75 to 104 (GSRPRAPEPLPAPQAVASAPAAAPIVPFAG) are domain II. Residues 105-322 (NLDSHYTFAN…GALNTLVARA (218 aa)) form a domain III, AAA+ region region. Residues glycine 150, glycine 152, lysine 153, and threonine 154 each contribute to the ATP site. The domain IV, binds dsDNA stretch occupies residues 323–442 (NFTGRSITVE…WEKLIRKLSE (120 aa)).

The protein belongs to the DnaA family. Oligomerizes as a right-handed, spiral filament on DNA at oriC.

The protein resides in the cytoplasm. Plays an essential role in the initiation and regulation of chromosomal replication. ATP-DnaA binds to the origin of replication (oriC) to initiate formation of the DNA replication initiation complex once per cell cycle. Binds the DnaA box (a 9 base pair repeat at the origin) and separates the double-stranded (ds)DNA. Forms a right-handed helical filament on oriC DNA; dsDNA binds to the exterior of the filament while single-stranded (ss)DNA is stabiized in the filament's interior. The ATP-DnaA-oriC complex binds and stabilizes one strand of the AT-rich DNA unwinding element (DUE), permitting loading of DNA polymerase. After initiation quickly degrades to an ADP-DnaA complex that is not apt for DNA replication. Binds acidic phospholipids. In Xanthomonas campestris pv. campestris (strain B100), this protein is Chromosomal replication initiator protein DnaA.